We begin with the raw amino-acid sequence, 464 residues long: Lysosomal dipeptide transporter MFSD1 (464 aa).

Positions 11 to 12 (LL) match the Dileucine internalization motif motif. S20 carries the phosphoserine modification. The next 12 helical transmembrane spans lie at 38-58 (LAHR…SYFC), 82-102 (LLYA…GFLI), 112-132 (TVIF…GGIF), 134-154 (AFWL…SLAV), 190-210 (LMGW…HMTL), 214-234 (LMIG…LAYL), 265-285 (LILV…FIGL), 303-323 (AINS…GLLV), 330-350 (IIWV…LAFT), 360-380 (LLGF…AFIV), 391-411 (FMQS…GMIL), and 417-437 (LLLE…VVCL).

Belongs to the major facilitator superfamily. Homodimer. Interacts with lysosomal protein GLMP (via lumenal domain); the interaction starts while both proteins are still in the endoplasmic reticulum and is required for stabilization of MFSD1 in lysosomes but has no direct effect on its targeting to lysosomes or transporter activity. Not N-glycosylated. In terms of tissue distribution, in brain, expressed in the cortex, striatum hippocampus, hypothalamus, thalamus and brainstem (at protein level). Widely expressed with highest levels in kidney and spleen (at protein level).

The protein localises to the lysosome membrane. It catalyses the reaction L-alpha-aminoacyl-L-arginine(out) = L-alpha-aminoacyl-L-arginine(in). The catalysed reaction is L-arginyl-L-alpha-amino acid(out) = L-arginyl-L-alpha-amino acid(in). The enzyme catalyses L-arginyl-glycine(out) = L-arginyl-glycine(in). It carries out the reaction L-alpha-aminoacyl-L-lysine(out) = L-alpha-aminoacyl-L-lysine(in). It catalyses the reaction L-aspartyl-L-lysine(out) = L-aspartyl-L-lysine(in). The catalysed reaction is L-alanyl-L-lysine(out) = L-alanyl-L-lysine(in). The enzyme catalyses L-lysyl-L-alpha-amino acid(out) = L-lysyl-L-alpha-amino acid(in). It carries out the reaction L-lysyl-L-alanine(out) = L-lysyl-L-alanine(in). It catalyses the reaction L-lysyl-L-lysine(out) = L-lysyl-L-lysine(in). The catalysed reaction is L-lysyl-glycine(out) = L-lysyl-glycine(in). The enzyme catalyses L-alpha-aminoacyl-L-histidine(out) = L-alpha-aminoacyl-L-histidine(in). It carries out the reaction L-histidyl-L-alpha-amino acid(out) = L-histidyl-L-alpha-amino acid(in). It catalyses the reaction L-histidyl-glycine(out) = L-histidyl-glycine(in). Functionally, lysosomal dipeptide uniporter that selectively exports lysine, arginine or histidine-containing dipeptides with a net positive charge from the lysosome lumen into the cytosol. Could play a role in a specific type of protein O-glycosylation indirectly regulating macrophages migration and tissue invasion. Also essential for liver homeostasis. The chain is Lysosomal dipeptide transporter MFSD1 from Mus musculus (Mouse).